Reading from the N-terminus, the 456-residue chain is Glutamate-gated chloride channel (456 aa).

The N-terminal stretch at 1 to 22 (MGSGHYFWAILYFASLCSASLA) is a signal peptide. Residues 23-245 (NNAKINFREK…VDLLFKREFS (223 aa)) lie on the Extracellular side of the membrane. L-glutamate-binding residues include arginine 71, arginine 90, and serine 154. A disulfide bridge links cysteine 163 with cysteine 177. Residue serine 183 participates in L-glutamate binding. A disulfide bridge links cysteine 222 with cysteine 233. A helical transmembrane segment spans residues 246 to 268 (YYLIQIYIPCCMLVIVSWVSFWL). The Cytoplasmic portion of the chain corresponds to 269–273 (DQGAV). A helical membrane pass occupies residues 274–295 (PARVSLGVTTLLTMATQTSGIN). Residues 296–302 (ASLPPVS) are Extracellular-facing. Residues 303-323 (YTKAIDVWTGVCLTFVFGALL) form a helical membrane-spanning segment. The Cytoplasmic segment spans residues 324-426 (EFALVNYASR…RQCSRSKRID (103 aa)). The helical transmembrane segment at 427–450 (VISRITFPLVFALFNLVYWSTYLF) threads the bilayer. Residues 451 to 456 (REEEDE) lie on the Extracellular side of the membrane.

The protein belongs to the ligand-gated ion channel (TC 1.A.9) family. Glutamate-gated chloride channel (TC 1.A.9.4) subfamily. Pentamer. Homomultimer. As to expression, expressed in the medulla layers (at protein level). Expressed in all major ON pathway medulla neurons (Mi1, Tm3, Mi4, and Mi9) and in OFF pathway neurons (Tm1, Tm2, Tm4, and Tm9).

The protein resides in the postsynaptic cell membrane. It is found in the cell membrane. Its activity is regulated as follows. Glutamate binding triggers a rapidly reversible current, while the anti-helmintic drug ivermectin triggers a permanently open channel configuration. Inhibited by picrotoxin. Functionally, glutamate-gated chloride channel subunit. Together with Gamma-aminobutyric acid receptor Rdl, plays an important role in the visual response by regulating the activity of ON/OFF-selective neurons. This chain is Glutamate-gated chloride channel (GluClalpha), found in Drosophila melanogaster (Fruit fly).